Consider the following 280-residue polypeptide: Thiamine-phosphate synthase (280 aa).

The segment at 1-64 (MGWSGSPLTL…ATGRGGLRMT (64 aa)) is disordered. Residues 42–55 (GRGELRSRERRGEA) are compositionally biased toward basic and acidic residues. Residues 104–108 (QLRCK) and Asn-141 contribute to the 4-amino-2-methyl-5-(diphosphooxymethyl)pyrimidine site. Residues Asp-142 and Asp-161 each coordinate Mg(2+). Residue Ser-179 coordinates 4-amino-2-methyl-5-(diphosphooxymethyl)pyrimidine. 205 to 207 (TPT) contacts 2-[(2R,5Z)-2-carboxy-4-methylthiazol-5(2H)-ylidene]ethyl phosphate. Lys-208 contributes to the 4-amino-2-methyl-5-(diphosphooxymethyl)pyrimidine binding site. Gly-236 provides a ligand contact to 2-[(2R,5Z)-2-carboxy-4-methylthiazol-5(2H)-ylidene]ethyl phosphate.

This sequence belongs to the thiamine-phosphate synthase family. Requires Mg(2+) as cofactor.

The catalysed reaction is 2-[(2R,5Z)-2-carboxy-4-methylthiazol-5(2H)-ylidene]ethyl phosphate + 4-amino-2-methyl-5-(diphosphooxymethyl)pyrimidine + 2 H(+) = thiamine phosphate + CO2 + diphosphate. The enzyme catalyses 2-(2-carboxy-4-methylthiazol-5-yl)ethyl phosphate + 4-amino-2-methyl-5-(diphosphooxymethyl)pyrimidine + 2 H(+) = thiamine phosphate + CO2 + diphosphate. It catalyses the reaction 4-methyl-5-(2-phosphooxyethyl)-thiazole + 4-amino-2-methyl-5-(diphosphooxymethyl)pyrimidine + H(+) = thiamine phosphate + diphosphate. It participates in cofactor biosynthesis; thiamine diphosphate biosynthesis; thiamine phosphate from 4-amino-2-methyl-5-diphosphomethylpyrimidine and 4-methyl-5-(2-phosphoethyl)-thiazole: step 1/1. Condenses 4-methyl-5-(beta-hydroxyethyl)thiazole monophosphate (THZ-P) and 2-methyl-4-amino-5-hydroxymethyl pyrimidine pyrophosphate (HMP-PP) to form thiamine monophosphate (TMP). This is Thiamine-phosphate synthase from Deinococcus radiodurans (strain ATCC 13939 / DSM 20539 / JCM 16871 / CCUG 27074 / LMG 4051 / NBRC 15346 / NCIMB 9279 / VKM B-1422 / R1).